The primary structure comprises 93 residues: RNA-binding protein Hfq (93 aa).

In terms of domain architecture, Sm spans 9-68 (DPFLNALRRERVPVSIYLVNGIKLQGQVESFDQFVILLKNTVSQMVYKHAISTVVPARPF). The disordered stretch occupies residues 70-93 (VNSHTAAPSPAGGFNGQQDDNNDQ).

Belongs to the Hfq family. In terms of assembly, homohexamer.

Functionally, RNA chaperone that binds small regulatory RNA (sRNAs) and mRNAs to facilitate mRNA translational regulation in response to envelope stress, environmental stress and changes in metabolite concentrations. Also binds with high specificity to tRNAs. The protein is RNA-binding protein Hfq of Shewanella sediminis (strain HAW-EB3).